The sequence spans 227 residues: uncharacterized protein (227 aa).

2 consecutive transmembrane segments (helical) span residues 7-24 (FVYA…VTWA) and 135-157 (VVVI…LMCL).

This sequence belongs to the TMEM9 family.

The protein resides in the membrane. This is an uncharacterized protein from Drosophila melanogaster (Fruit fly).